The primary structure comprises 407 residues: Imidazolonepropionase (407 aa).

Histidine 74 and histidine 76 together coordinate Fe(3+). Positions 74 and 76 each coordinate Zn(2+). 3 residues coordinate 4-imidazolone-5-propanoate: arginine 83, tyrosine 146, and histidine 179. An N-formimidoyl-L-glutamate-binding site is contributed by tyrosine 146. A Fe(3+)-binding site is contributed by histidine 244. Histidine 244 is a Zn(2+) binding site. Glutamine 247 contacts 4-imidazolone-5-propanoate. Aspartate 319 serves as a coordination point for Fe(3+). Aspartate 319 is a Zn(2+) binding site. N-formimidoyl-L-glutamate-binding residues include asparagine 321 and glycine 323. A 4-imidazolone-5-propanoate-binding site is contributed by threonine 324.

This sequence belongs to the metallo-dependent hydrolases superfamily. HutI family. Zn(2+) is required as a cofactor. It depends on Fe(3+) as a cofactor.

It localises to the cytoplasm. The catalysed reaction is 4-imidazolone-5-propanoate + H2O = N-formimidoyl-L-glutamate. It participates in amino-acid degradation; L-histidine degradation into L-glutamate; N-formimidoyl-L-glutamate from L-histidine: step 3/3. Functionally, catalyzes the hydrolytic cleavage of the carbon-nitrogen bond in imidazolone-5-propanoate to yield N-formimidoyl-L-glutamate. It is the third step in the universal histidine degradation pathway. The chain is Imidazolonepropionase from Salmonella schwarzengrund (strain CVM19633).